We begin with the raw amino-acid sequence, 683 residues long: Transcription factor SFP1 (683 aa).

Disordered regions lie at residues 156–178 (ATNT…PYHR), 305–324 (DSNS…NIIQ), 332–357 (VNHT…TANP), 399–420 (SNSP…NSGI), 498–517 (HNSM…YNTF), and 535–573 (IDDI…NNYK). The span at 160–173 (LQIQQPTKRPSVSN) shows a compositional bias: polar residues. Residues 230–458 (NTTNMSQIPM…NYSLNKTSRN (229 aa)) are prion domain (PrD). Residues 535-557 (IDDIDDDDDVDDDDDDDDDDDTE) are compositionally biased toward acidic residues. A compositionally biased stretch (polar residues) spans 558–573 (NGSSSNGKSVHNNNYK). C2H2-type zinc fingers lie at residues 598–623 (FKCP…LHGH) and 659–683 (YRCE…HSTH).

In terms of assembly, interacts with the target of rapamycin complex 1 (TORC1) in a rapamycin-dependent manner. Interacts with MRS6. Post-translationally, phosphorylated by TORC1 kinase at multiple sites. Phosphorylation regulates nuclear localization and RP promoter binding.

The protein localises to the cytoplasm. Its subcellular location is the nucleus. Functionally, transcription factor that regulates ribosomal protein (RP) and ribosome biogenesis (Ribi) gene expression in response to nutrients and stress. Promotes RP gene expression under optimal growth conditions. Leaves the nucleus upon environmental challenges, resulting in a down-regulation of RP gene transcription. The effect of the environmental cues on SFP1 localization is mediated through the TOR pathway. Also regulates the expression of genes involved in the G2/M transition during the mitotic cell cycle and the DNA-damage response. Required for carbon-source modulation of cell size. The chain is Transcription factor SFP1 (SFP1) from Saccharomyces cerevisiae (strain ATCC 204508 / S288c) (Baker's yeast).